A 250-amino-acid chain; its full sequence is MAEQTLSFVDCLMSRFPTVRVSVAQPRGEISLDVPVVEWCAVCKALRDEFDFEQLSDLCGVDYLGYGNAEWDTTDVSAQGFSRGVAGKAVGRFAWGEFPSAGSNDGTQPWDVPQERFAVLAHLISYRHNRRLRVRCFASNDALPIVASLTDVWPGVNWFEREAFDLFGIVFEGHPDLRRILTDYGFIGHPFRKDFPLTGNVEVRYDEEKKRVVYVPVTSVEPRVSVPRVIRDDPRFGAAAGESTHSETVK.

This sequence belongs to the complex I 30 kDa subunit family. As to quaternary structure, NDH-1 is composed of 14 different subunits. Subunits NuoB, C, D, E, F, and G constitute the peripheral sector of the complex.

The protein localises to the cell inner membrane. It catalyses the reaction a quinone + NADH + 5 H(+)(in) = a quinol + NAD(+) + 4 H(+)(out). Its function is as follows. NDH-1 shuttles electrons from NADH, via FMN and iron-sulfur (Fe-S) centers, to quinones in the respiratory chain. The immediate electron acceptor for the enzyme in this species is believed to be ubiquinone. Couples the redox reaction to proton translocation (for every two electrons transferred, four hydrogen ions are translocated across the cytoplasmic membrane), and thus conserves the redox energy in a proton gradient. The polypeptide is NADH-quinone oxidoreductase subunit C (Xylella fastidiosa (strain M23)).